The following is a 287-amino-acid chain: RNA polymerase sigma factor RpoH (287 aa).

Positions 54–123 (LILSHLRFVI…IHEYVLRNWR (70 aa)) are sigma-70 factor domain-2. The Interaction with polymerase core subunit RpoC motif lies at 78–81 (DLIQ). A sigma-70 factor domain-4 region spans residues 230–283 (ALSSLDERSRNIIHARWLDDSDHKMTLREIAHNYGISAERVRQLEKNAMKKLKV). The segment at residues 256 to 275 (LREIAHNYGISAERVRQLEK) is a DNA-binding region (H-T-H motif).

This sequence belongs to the sigma-70 factor family. RpoH subfamily. Interacts with the RNA polymerase core enzyme.

The protein localises to the cytoplasm. In terms of biological role, sigma factors are initiation factors that promote the attachment of RNA polymerase to specific initiation sites and are then released. This sigma factor is involved in regulation of expression of heat shock genes. The chain is RNA polymerase sigma factor RpoH from Buchnera aphidicola subsp. Baizongia pistaciae (strain Bp).